The sequence spans 301 residues: UDP-N-acetylenolpyruvoylglucosamine reductase (301 aa).

The FAD-binding PCMH-type domain maps to 30 to 194; that stretch reads VGGEPDYLVF…LSAKFALAPG (165 aa). Arg-173 is an active-site residue. The active-site Proton donor is the Ser-223. Glu-293 is a catalytic residue.

The protein belongs to the MurB family. It depends on FAD as a cofactor.

Its subcellular location is the cytoplasm. The enzyme catalyses UDP-N-acetyl-alpha-D-muramate + NADP(+) = UDP-N-acetyl-3-O-(1-carboxyvinyl)-alpha-D-glucosamine + NADPH + H(+). The protein operates within cell wall biogenesis; peptidoglycan biosynthesis. Its function is as follows. Cell wall formation. The polypeptide is UDP-N-acetylenolpyruvoylglucosamine reductase (Streptococcus pneumoniae (strain CGSP14)).